Here is a 337-residue protein sequence, read N- to C-terminus: Adenosine deaminase-like protein (337 aa).

Zn(2+) is bound by residues histidine 14 and histidine 16. N(6)-methyl-AMP-binding positions include histidine 16, asparagine 18, histidine 66, threonine 98–lysine 101, and glycine 171. Histidine 198 is a binding site for Zn(2+). Positions 201, 276, and 277 each coordinate N(6)-methyl-AMP. Catalysis depends on glutamate 201, which acts as the Proton donor. Aspartate 276 serves as a coordination point for Zn(2+).

Belongs to the metallo-dependent hydrolases superfamily. Adenosine and AMP deaminases family. As to quaternary structure, monomer. Zn(2+) serves as cofactor.

It carries out the reaction N(6)-methyl-AMP + H2O + H(+) = IMP + methylamine. Catalyzes the hydrolysis of the free cytosolic methylated adenosine nucleotide N(6)-methyl-AMP (N6-mAMP) to produce inositol monophosphate (IMP) and methylamine. Is required for the catabolism of cytosolic N6-mAMP, which is derived from the degradation of mRNA containing N6-methylated adenine (m6A). This Drosophila melanogaster (Fruit fly) protein is Adenosine deaminase-like protein (Ada).